The primary structure comprises 778 residues: Ribonucleoside-diphosphate reductase large subunit (778 aa).

Residues Ser-177, 192–193 (SC), Gly-221, 419–423 (NLCIE), and 613–617 (PTATS) contribute to the substrate site. Cys-193 and Cys-439 form a disulfide bridge. Asn-419 acts as the Proton acceptor in catalysis. Cys-421 functions as the Cysteine radical intermediate in the catalytic mechanism. The active-site Proton acceptor is Glu-423.

Belongs to the ribonucleoside diphosphate reductase large chain family. As to quaternary structure, heterotetramer composed of a homodimer of the large subunit (R1) and a homodimer of the small subunit (R2). Larger multisubunit protein complex are also active, composed of (R1)n(R2)n.

It catalyses the reaction a 2'-deoxyribonucleoside 5'-diphosphate + [thioredoxin]-disulfide + H2O = a ribonucleoside 5'-diphosphate + [thioredoxin]-dithiol. Its activity is regulated as follows. Under complex allosteric control mediated by deoxynucleoside triphosphates and ATP binding. The type of nucleotide bound at the specificity site determines substrate preference. It seems probable that ATP makes the enzyme reduce CDP and UDP, dGTP favors ADP reduction and dTTP favors GDP reduction. Functionally, ribonucleoside-diphosphate reductase holoenzyme provides the precursors necessary for viral DNA synthesis. Allows virus growth in non-dividing cells. Catalyzes the biosynthesis of deoxyribonucleotides from the corresponding ribonucleotides. This chain is Ribonucleoside-diphosphate reductase large subunit, found in Ornithodoros (relapsing fever ticks).